An 86-amino-acid chain; its full sequence is Large ribosomal subunit protein uL23 (86 aa).

It belongs to the universal ribosomal protein uL23 family. As to quaternary structure, part of the 50S ribosomal subunit. Contacts protein L29.

Functionally, binds to 23S rRNA. One of the proteins that surrounds the polypeptide exit tunnel on the outside of the ribosome. This is Large ribosomal subunit protein uL23 from Methanosphaera stadtmanae (strain ATCC 43021 / DSM 3091 / JCM 11832 / MCB-3).